The chain runs to 351 residues: uncharacterized protein (351 aa).

The protein belongs to the bacterial luciferase oxidoreductase family.

This is an uncharacterized protein from Sinorhizobium fredii (strain NBRC 101917 / NGR234).